Here is a 183-residue protein sequence, read N- to C-terminus: dTTP/UTP pyrophosphatase (183 aa).

D64 acts as the Proton acceptor in catalysis.

It belongs to the Maf family. YhdE subfamily. It depends on a divalent metal cation as a cofactor.

It is found in the cytoplasm. The enzyme catalyses dTTP + H2O = dTMP + diphosphate + H(+). It carries out the reaction UTP + H2O = UMP + diphosphate + H(+). Its function is as follows. Nucleoside triphosphate pyrophosphatase that hydrolyzes dTTP and UTP. May have a dual role in cell division arrest and in preventing the incorporation of modified nucleotides into cellular nucleic acids. This chain is dTTP/UTP pyrophosphatase, found in Acinetobacter baylyi (strain ATCC 33305 / BD413 / ADP1).